A 601-amino-acid polypeptide reads, in one-letter code: ATP-dependent RNA helicase DeaD (601 aa).

Positions 6-34 (STFSFLGLNPFIIQSLNEMGYVKPSPIQA) match the Q motif motif. The 172-residue stretch at 37–208 (IPLLLEGRDV…KRFMRNPKEI (172 aa)) folds into the Helicase ATP-binding domain. 50 to 57 (AQTGSGKT) contacts ATP. The short motif at 156 to 159 (DEAD) is the DEAD box element. In terms of domain architecture, Helicase C-terminal spans 231-378 (KTDALIRFLE…EVQLPKVELL (148 aa)). Over residues 552–576 (SRHYENKTTHRSIFNKDKNSNRRVS) the composition is skewed to basic and acidic residues. The segment at 552–601 (SRHYENKTTHRSIFNKDKNSNRRVSDGSFNKSNSPKKTEFKSSFFRRRNV) is disordered.

It belongs to the DEAD box helicase family. DeaD/CsdA subfamily.

Its subcellular location is the cytoplasm. It catalyses the reaction ATP + H2O = ADP + phosphate + H(+). DEAD-box RNA helicase involved in various cellular processes at low temperature, including ribosome biogenesis, mRNA degradation and translation initiation. This Buchnera aphidicola subsp. Acyrthosiphon pisum (strain APS) (Acyrthosiphon pisum symbiotic bacterium) protein is ATP-dependent RNA helicase DeaD.